A 99-amino-acid polypeptide reads, in one-letter code: Aspartyl/glutamyl-tRNA(Asn/Gln) amidotransferase subunit C (99 aa).

It belongs to the GatC family. As to quaternary structure, heterotrimer of A, B and C subunits.

It catalyses the reaction L-glutamyl-tRNA(Gln) + L-glutamine + ATP + H2O = L-glutaminyl-tRNA(Gln) + L-glutamate + ADP + phosphate + H(+). The enzyme catalyses L-aspartyl-tRNA(Asn) + L-glutamine + ATP + H2O = L-asparaginyl-tRNA(Asn) + L-glutamate + ADP + phosphate + 2 H(+). Functionally, allows the formation of correctly charged Asn-tRNA(Asn) or Gln-tRNA(Gln) through the transamidation of misacylated Asp-tRNA(Asn) or Glu-tRNA(Gln) in organisms which lack either or both of asparaginyl-tRNA or glutaminyl-tRNA synthetases. The reaction takes place in the presence of glutamine and ATP through an activated phospho-Asp-tRNA(Asn) or phospho-Glu-tRNA(Gln). This chain is Aspartyl/glutamyl-tRNA(Asn/Gln) amidotransferase subunit C, found in Mycolicibacterium vanbaalenii (strain DSM 7251 / JCM 13017 / BCRC 16820 / KCTC 9966 / NRRL B-24157 / PYR-1) (Mycobacterium vanbaalenii).